A 214-amino-acid chain; its full sequence is MIAFILLSLAAVLQQSFGTVDFDSESPRRPEKQREIVNMHNSLRRSVSPTASNMLKMEWYPEAASNAERWAYNCITGHSSNPSRVIDGIQCGENIYMSPVPITWTEIIQIWYDENKNFVYGVGANPPGSMIGHYTQIVWYKSYRIGCAAVYCPSTYYSYFYVCQYCPTGNFNGLYATPYKSGPPCGDCPSACVKGLCTNPCTVENKFTNCNTLV.

Positions 1–18 (MIAFILLSLAAVLQQSFG) are cleaved as a signal peptide. The region spanning 37–165 (VNMHNSLRRS…YYSYFYVCQY (129 aa)) is the SCP domain. 5 disulfide bridges follow: Cys-74–Cys-152, Cys-91–Cys-166, Cys-147–Cys-163, Cys-185–Cys-192, and Cys-188–Cys-197. A ShKT domain is found at 201–214 (CTVENKFTNCNTLV).

This sequence belongs to the CRISP family. In terms of tissue distribution, expressed by the venom gland.

The protein localises to the secreted. Its function is as follows. Blocks contraction of smooth muscle elicited by high potassium-induced depolarization, but does not block caffeine-stimulated contraction. May target voltage-gated calcium channels on smooth muscle. This Leioheterodon madagascariensis (Malagasy giant hognose snake) protein is Cysteine-rich venom protein LEI1.